We begin with the raw amino-acid sequence, 137 residues long: Nucleoside diphosphate kinase (137 aa).

The ATP site is built by Lys-9, Phe-57, Arg-85, Thr-91, Arg-102, and Asn-112. His-115 functions as the Pros-phosphohistidine intermediate in the catalytic mechanism.

The protein belongs to the NDK family. As to quaternary structure, homotetramer. It depends on Mg(2+) as a cofactor.

The protein resides in the cytoplasm. The catalysed reaction is a 2'-deoxyribonucleoside 5'-diphosphate + ATP = a 2'-deoxyribonucleoside 5'-triphosphate + ADP. The enzyme catalyses a ribonucleoside 5'-diphosphate + ATP = a ribonucleoside 5'-triphosphate + ADP. Functionally, major role in the synthesis of nucleoside triphosphates other than ATP. The ATP gamma phosphate is transferred to the NDP beta phosphate via a ping-pong mechanism, using a phosphorylated active-site intermediate. This chain is Nucleoside diphosphate kinase, found in Sulfurovum sp. (strain NBC37-1).